The sequence spans 68 residues: Bacteriocin lactococcin-B (68 aa).

Positions 1–21 are excised as a propeptide; that stretch reads MKNQLNFNIVSDEELAEVNGG.

The protein localises to the secreted. Kills Lactococci by dissipating the membrane potential of the cells. This Lactococcus lactis subsp. cremoris (Streptococcus cremoris) protein is Bacteriocin lactococcin-B (lcnB).